The chain runs to 427 residues: Glutamate-1-semialdehyde 2,1-aminomutase (427 aa).

Position 265 is an N6-(pyridoxal phosphate)lysine (Lys265).

This sequence belongs to the class-III pyridoxal-phosphate-dependent aminotransferase family. HemL subfamily. Homodimer. The cofactor is pyridoxal 5'-phosphate.

It is found in the cytoplasm. It carries out the reaction (S)-4-amino-5-oxopentanoate = 5-aminolevulinate. The protein operates within porphyrin-containing compound metabolism; protoporphyrin-IX biosynthesis; 5-aminolevulinate from L-glutamyl-tRNA(Glu): step 2/2. The chain is Glutamate-1-semialdehyde 2,1-aminomutase from Pseudomonas aeruginosa (strain UCBPP-PA14).